We begin with the raw amino-acid sequence, 712 residues long: Ribosomal RNA large subunit methyltransferase K/L (712 aa).

A THUMP domain is found at glycine 46–leucine 157.

This sequence belongs to the methyltransferase superfamily. RlmKL family.

Its subcellular location is the cytoplasm. The catalysed reaction is guanosine(2445) in 23S rRNA + S-adenosyl-L-methionine = N(2)-methylguanosine(2445) in 23S rRNA + S-adenosyl-L-homocysteine + H(+). It carries out the reaction guanosine(2069) in 23S rRNA + S-adenosyl-L-methionine = N(2)-methylguanosine(2069) in 23S rRNA + S-adenosyl-L-homocysteine + H(+). Specifically methylates the guanine in position 2445 (m2G2445) and the guanine in position 2069 (m7G2069) of 23S rRNA. This is Ribosomal RNA large subunit methyltransferase K/L from Actinobacillus pleuropneumoniae serotype 5b (strain L20).